Reading from the N-terminus, the 55-residue chain is Large ribosomal subunit protein bL33 (55 aa).

The protein belongs to the bacterial ribosomal protein bL33 family.

This Dehalococcoides mccartyi (strain ATCC BAA-2100 / JCM 16839 / KCTC 5957 / BAV1) protein is Large ribosomal subunit protein bL33.